The sequence spans 474 residues: Aspartic-type endopeptidase ctsD (474 aa).

Residues 1–19 form the signal peptide; the sequence is MHLLQCLLSTISLASTVTA. The 308-residue stretch at 106 to 413 folds into the Peptidase A1 domain; sequence YFATVRVGSQ…DYDNHRIGFA (308 aa). The active site involves Asp-124. N-linked (GlcNAc...) asparagine glycosylation is found at Asn-189, Asn-197, Asn-275, and Asn-301. Residue Asp-307 is part of the active site. Asn-338, Asn-344, and Asn-414 each carry an N-linked (GlcNAc...) asparagine glycan. The GPI-anchor amidated serine moiety is linked to residue Ser-452. A propeptide spans 453 to 474 (removed in mature form); that stretch reads ASIVSRFVHWPFIFALLCMVLV.

The protein belongs to the peptidase A1 family.

The protein resides in the cell membrane. Secreted aspartic-type endopeptidase which is secreted and contributes to virulence. In Aspergillus fumigatus (strain ATCC MYA-4609 / CBS 101355 / FGSC A1100 / Af293) (Neosartorya fumigata), this protein is Aspartic-type endopeptidase ctsD (ctsD).